Consider the following 324-residue polypeptide: MEVDEDIELQKHQEQQSRKLQRFSEDNTGLMRNWNNPSSRIIRVSRASGGKDRHSKVLTSKGLRDRRIRLSVATAIQFYDLQDRLGFDQPSKAVEWLINAASDSITDLPLLNTNFDHLDQNQNQTKSACSSGTSESSLLSLSRTEIRGKARERARERTAKDRDKDLQNAHSSFTQLLTGGFDQQPSNRNWTGGSDCFNPVQLQIPNSSSQEPMNHPFSFVPDYNFGISSSSSAINGGYSSRGTLQSNSQSLFLNNNNNITQRSSISSSSSSSSPMDSQSISFFMATPPPLDHHNHQLPETFDGRLYLYYGEGNRSSDDKAKERR.

A TCP domain is found at G50 to L108. 2 disordered regions span residues Q122–H215 and Q261–L297. Residues S127–S142 are compositionally biased toward low complexity. Positions T144–R162 constitute a R domain. Residues T144 to Q167 are compositionally biased toward basic and acidic residues. Polar residues-rich tracts occupy residues N168–G192 and V200–P212. Positions Q261–S281 are enriched in low complexity.

Forms a heterodimeric complex with ABAP1. Interacts with SPL. Expressed in cotyledons, particularly in the vascular region, in leaves, roots, stems, buds, flowers and siliques.

The protein resides in the nucleus. Functionally, plays a pivotal role in the control of morphogenesis of shoot organs by negatively regulating the expression of boundary-specific genes such as CUC genes, probably through the induction of miRNA (e.g. miR164). In association with ABAP1, exerts a negative role in cell proliferation in leaves, possibly by inhibiting mitotic DNA replication. Participates in ovule development. In Arabidopsis thaliana (Mouse-ear cress), this protein is Transcription factor TCP24 (TCP24).